The following is a 386-amino-acid chain: 5-hydroxytryptamine receptor 1B (386 aa).

Topologically, residues 1–42 are extracellular; sequence MEEQGIQCAPPPPAASQTGVPLTNLSHNCSADGYIYQDSIAL. Asparagine 24 and asparagine 28 each carry an N-linked (GlcNAc...) asparagine glycan. A helical transmembrane segment spans residues 43 to 68; it reads PWKVLLVALLALITLATTLSNAFVIA. The Cytoplasmic segment spans residues 69–82; the sequence is TVYRTRKLHTPANY. Residues 83-107 form a helical membrane-spanning segment; sequence LIASLAVTDLLVSILVMPISTMYTV. At 108–115 the chain is on the extracellular side; that stretch reads TGRWTLGQ. A helical transmembrane segment spans residues 116 to 141; sequence VVCDFWLSSDITCCTASIMHLCVIAL. A disulfide bridge connects residues cysteine 118 and cysteine 195. Ergotamine-binding residues include aspartate 125 and threonine 130. Positions 142-144 match the DRY motif; important for ligand-induced conformation changes and signaling motif; that stretch reads DRY. The Cytoplasmic portion of the chain corresponds to 142 to 161; sequence DRYWAITDAVEYSAKRTPKR. A helical transmembrane segment spans residues 162 to 180; sequence AAIMIVLVWVFSISISLPP. At 181–201 the chain is on the extracellular side; that stretch reads FFWRQAKAEEEMLDCFVNTDH. Ergotamine is bound at residue valine 197. Residues 202–225 form a helical membrane-spanning segment; that stretch reads VLYTVYSTVGAFYLPTLLLIALYG. Over 226 to 311 the chain is Cytoplasmic; that stretch reads RIYVEARSRI…AARERKATKT (86 aa). The span at 255–268 shows a compositional bias: polar residues; it reads DSPGSTSSVTSINS. The interval 255 to 278 is disordered; it reads DSPGSTSSVTSINSRAPDVPSESG. A helical transmembrane segment spans residues 312–333; that stretch reads LGIILGAFIVCWLPFFIISLVM. At 334–343 the chain is on the extracellular side; it reads PICKDACWFH. Residues 344-366 form a helical membrane-spanning segment; it reads MAIFDFFNWLGYLNSLINPIIYT. The NPxxY motif; important for ligand-induced conformation changes and signaling motif lies at 361 to 365; it reads NPIIY. The Cytoplasmic segment spans residues 367–386; sequence MSNEDFKQAFHKLIRFKCAG. Cysteine 384 carries the S-palmitoyl cysteine lipid modification.

It belongs to the G-protein coupled receptor 1 family. As to quaternary structure, homodimer. Heterodimer with HTR1D. Phosphorylated. Desensitization of the receptor may be mediated by its phosphorylation. Post-translationally, palmitoylated. As to expression, predominantly expressed in striatum and Purkinje cells.

The protein localises to the cell membrane. Functionally, G-protein coupled receptor for 5-hydroxytryptamine (serotonin). Also functions as a receptor for ergot alkaloid derivatives, various anxiolytic and antidepressant drugs and other psychoactive substances, such as lysergic acid diethylamide (LSD). Ligand binding causes a conformation change that triggers signaling via guanine nucleotide-binding proteins (G proteins) and modulates the activity of downstream effectors, such as adenylate cyclase. HTR1B is coupled to G(i)/G(o) G alpha proteins and mediates inhibitory neurotransmission by inhibiting adenylate cyclase activity. Arrestin family members inhibit signaling via G proteins and mediate activation of alternative signaling pathways. Regulates the release of 5-hydroxytryptamine, dopamine and acetylcholine in the brain, and thereby affects neural activity, nociceptive processing, pain perception, mood and behavior. Besides, plays a role in vasoconstriction of cerebral arteries. This chain is 5-hydroxytryptamine receptor 1B (Htr1b), found in Mus musculus (Mouse).